A 1269-amino-acid polypeptide reads, in one-letter code: DNA-directed RNA polymerase subunit beta'' (1269 aa).

Zn(2+) contacts are provided by cysteine 226, cysteine 301, cysteine 308, and cysteine 311.

It belongs to the RNA polymerase beta' chain family. RpoC2 subfamily. In plastids the minimal PEP RNA polymerase catalytic core is composed of four subunits: alpha, beta, beta', and beta''. When a (nuclear-encoded) sigma factor is associated with the core the holoenzyme is formed, which can initiate transcription. Zn(2+) serves as cofactor.

The protein localises to the plastid. It localises to the chloroplast. The catalysed reaction is RNA(n) + a ribonucleoside 5'-triphosphate = RNA(n+1) + diphosphate. Functionally, DNA-dependent RNA polymerase catalyzes the transcription of DNA into RNA using the four ribonucleoside triphosphates as substrates. This Cyanidium caldarium (Red alga) protein is DNA-directed RNA polymerase subunit beta''.